The primary structure comprises 523 residues: 2-isopropylmalate synthase (523 aa).

The 263-residue stretch at 5-267 (VIIFDTTLRD…HTNINHHEIW (263 aa)) folds into the Pyruvate carboxyltransferase domain. Positions 14, 202, 204, and 238 each coordinate Mn(2+). Positions 392–523 (RLDYFSVQSG…QNKENNKETV (132 aa)) are regulatory domain.

Belongs to the alpha-IPM synthase/homocitrate synthase family. LeuA type 1 subfamily. As to quaternary structure, homodimer. The cofactor is Mn(2+).

It localises to the cytoplasm. The enzyme catalyses 3-methyl-2-oxobutanoate + acetyl-CoA + H2O = (2S)-2-isopropylmalate + CoA + H(+). Its pathway is amino-acid biosynthesis; L-leucine biosynthesis; L-leucine from 3-methyl-2-oxobutanoate: step 1/4. Its function is as follows. Catalyzes the condensation of the acetyl group of acetyl-CoA with 3-methyl-2-oxobutanoate (2-ketoisovalerate) to form 3-carboxy-3-hydroxy-4-methylpentanoate (2-isopropylmalate). The chain is 2-isopropylmalate synthase from Salmonella dublin (strain CT_02021853).